We begin with the raw amino-acid sequence, 498 residues long: Glutamate--tRNA ligase (498 aa).

Residues 11–21 carry the 'HIGH' region motif; that stretch reads PSPTGHLHIGN. Positions 261-265 match the 'KMSKS' region motif; the sequence is KLSKR. Lysine 264 is a binding site for ATP.

Belongs to the class-I aminoacyl-tRNA synthetase family. Glutamate--tRNA ligase type 1 subfamily. Monomer.

The protein localises to the cytoplasm. The catalysed reaction is tRNA(Glu) + L-glutamate + ATP = L-glutamyl-tRNA(Glu) + AMP + diphosphate. In terms of biological role, catalyzes the attachment of glutamate to tRNA(Glu) in a two-step reaction: glutamate is first activated by ATP to form Glu-AMP and then transferred to the acceptor end of tRNA(Glu). This Oenococcus oeni (strain ATCC BAA-331 / PSU-1) protein is Glutamate--tRNA ligase.